Reading from the N-terminus, the 253-residue chain is Chitooligosaccharide deacetylase (253 aa).

Positions 61 and 126 each coordinate Mg(2+).

This sequence belongs to the YdjC deacetylase family. ChbG subfamily. As to quaternary structure, homodimer. Mg(2+) is required as a cofactor.

The protein resides in the cytoplasm. The catalysed reaction is N,N'-diacetylchitobiose + H2O = N-acetyl-beta-D-glucosaminyl-(1-&gt;4)-D-glucosamine + acetate. The enzyme catalyses diacetylchitobiose-6'-phosphate + H2O = N'-monoacetylchitobiose-6'-phosphate + acetate. The protein operates within glycan degradation; chitin degradation. Its function is as follows. Involved in the degradation of chitin. ChbG is essential for growth on the acetylated chitooligosaccharides chitobiose and chitotriose but is dispensable for growth on cellobiose and chitosan dimer, the deacetylated form of chitobiose. Deacetylation of chitobiose-6-P and chitotriose-6-P is necessary for both the activation of the chb promoter by the regulatory protein ChbR and the hydrolysis of phosphorylated beta-glucosides by the phospho-beta-glucosidase ChbF. Catalyzes the removal of only one acetyl group from chitobiose-6-P to yield monoacetylchitobiose-6-P, the inducer of ChbR and the substrate of ChbF. The sequence is that of Chitooligosaccharide deacetylase from Yersinia enterocolitica serotype O:8 / biotype 1B (strain NCTC 13174 / 8081).